The following is a 254-amino-acid chain: MPTLKLIGLGLSAKFVTREAIDEISKCNVVLFESYTSLSCDINLDFIKFLNKNVIIVDRKFIENNIKEIIKLLKEKEDVCIVTIGDPMIATTHVSLIVEVKDKGYNFKVIPGISVHCYIISKSMLSSYKFGKSVTITYPYNNKIDTTPYDVIYDNFIRGLHTILYLDLKEDKIMTAKEAVELLIEMEKIKKQGLVSDDRIIIVGQRLGCDDEEVVALRLKEVFNYKFKEPPHIIVFPTDKLHFMEVEALKCLMK.

S-adenosyl-L-methionine contacts are provided by residues Leu11, Asp86, Ile89, 114–115 (SV), Leu166, Leu207, and His232.

This sequence belongs to the diphthine synthase family. In terms of assembly, homodimer.

It catalyses the reaction 2-[(3S)-amino-3-carboxypropyl]-L-histidyl-[translation elongation factor 2] + 3 S-adenosyl-L-methionine = diphthine-[translation elongation factor 2] + 3 S-adenosyl-L-homocysteine + 3 H(+). The protein operates within protein modification; peptidyl-diphthamide biosynthesis. S-adenosyl-L-methionine-dependent methyltransferase that catalyzes the trimethylation of the amino group of the modified target histidine residue in translation elongation factor 2 (EF-2), to form an intermediate called diphthine. The three successive methylation reactions represent the second step of diphthamide biosynthesis. The sequence is that of Diphthine synthase from Sulfurisphaera tokodaii (strain DSM 16993 / JCM 10545 / NBRC 100140 / 7) (Sulfolobus tokodaii).